Here is a 256-residue protein sequence, read N- to C-terminus: C-8 sterol isomerase (256 aa).

Residues 1 to 31 (MPPKKQSSSGGNKPSGSGSSSGRSSSGSSCR) form a disordered region. The span at 7 to 30 (SSSGGNKPSGSGSSSGRSSSGSSC) shows a compositional bias: low complexity. The chain crosses the membrane as a helical span at residues 40 to 60 (IGGWLKFFAILFALVAPIAYV).

This sequence belongs to the ERG2 family.

The protein resides in the endoplasmic reticulum membrane. The protein operates within steroid metabolism; ergosterol biosynthesis; ergosterol from zymosterol: step 2/5. Catalyzes the reaction which results in unsaturation at C-7 in the B ring of sterols. The sequence is that of C-8 sterol isomerase (erg-1) from Neurospora crassa (strain ATCC 24698 / 74-OR23-1A / CBS 708.71 / DSM 1257 / FGSC 987).